Reading from the N-terminus, the 131-residue chain is Small ribosomal subunit protein uS12 (131 aa).

Residues 1–22 are disordered; that stretch reads MPTTQQLLRKGRKVLQKKSKVP. Positions 9–20 are enriched in basic residues; that stretch reads RKGRKVLQKKSK. Residue Asp89 is modified to 3-methylthioaspartic acid. The tract at residues 102 to 131 is disordered; that stretch reads LDTQGVKDRNKSRSKYGTKKPKAGAAAAKK. The segment covering 113–131 has biased composition (basic residues); it reads SRSKYGTKKPKAGAAAAKK.

Belongs to the universal ribosomal protein uS12 family. In terms of assembly, part of the 30S ribosomal subunit. Contacts proteins S8 and S17. May interact with IF1 in the 30S initiation complex.

With S4 and S5 plays an important role in translational accuracy. In terms of biological role, interacts with and stabilizes bases of the 16S rRNA that are involved in tRNA selection in the A site and with the mRNA backbone. Located at the interface of the 30S and 50S subunits, it traverses the body of the 30S subunit contacting proteins on the other side and probably holding the rRNA structure together. The combined cluster of proteins S8, S12 and S17 appears to hold together the shoulder and platform of the 30S subunit. In Deinococcus radiodurans (strain ATCC 13939 / DSM 20539 / JCM 16871 / CCUG 27074 / LMG 4051 / NBRC 15346 / NCIMB 9279 / VKM B-1422 / R1), this protein is Small ribosomal subunit protein uS12.